Consider the following 847-residue polypeptide: FAST kinase domain-containing protein 1, mitochondrial (847 aa).

The residue at position 360 (lysine 360) is an N6-acetyllysine. The 61-residue stretch at isoleucine 777–glutamate 837 folds into the RAP domain.

This sequence belongs to the FAST kinase family. Expression detected in spleen, thymus, testis, ovary, colon, heart, smooth muscle, kidney, brain, lung, liver and white adipose tissue with highest expression in heart.

Its subcellular location is the mitochondrion. Functionally, involved in the down-regulation of mitochondrial MT-ND3 mRNA levels which leads to decreased respiratory complex I abundance and activity. The polypeptide is FAST kinase domain-containing protein 1, mitochondrial (FASTKD1) (Homo sapiens (Human)).